The primary structure comprises 512 residues: MTQFITHKWLAALGLASSIAAFPALAAKDVVVAVGSNFTTLDPYDANDTLSQAVAKSFYQGLFGLDKDMKVKNVLAEGYTVSDDGLTYTITLRQGVKFQDGADFNAAAVKANLDRASNPDNHLKRYNLYKNIAKTEVVDPATVKITLKQPFSAFINILAHPATAMISPQALEKYGKDIGFHPVGTGPYQLETWNQTDFVKVKKFAGYWQQGLPKLDSITWRPVTDNNTRAAMLQTGEAQFAFPIPYEQAALLAKNKNLELVASPSIMQRYISMNVTQKPFDNPKVREALNYAINRQALVKVAFAGYATPATGVVPPSIAYAQSYQPWPYDPAKARELLKEAGYPDGFSTTLWSSHNHSTAQKVLQFTQQQLAQIGVKARITAMDAGQRAAEVEGKGQKESGVRMFYTGWSASTGEADWALSPLFASQNWPPTQFNTAFYSNKQVDSDLAAALKTNDPQEKTRLYKEAQDIIWKESPWIPLVVEKLVSAHSKNLTGFWIMPDTGFSFDDADLK.

A signal peptide spans 1 to 26; that stretch reads MTQFITHKWLAALGLASSIAAFPALA.

The protein belongs to the bacterial solute-binding protein 5 family. As to quaternary structure, the complex is composed of two ATP-binding proteins (GsiA), two transmembrane proteins (GsiC and GsiD) and a solute-binding protein (GsiB).

It is found in the periplasm. Functionally, part of the ABC transporter complex GsiABCD involved in glutathione import. Binds glutathione. The polypeptide is Glutathione-binding protein GsiB (Salmonella typhimurium (strain LT2 / SGSC1412 / ATCC 700720)).